The primary structure comprises 181 residues: NADH-quinone oxidoreductase subunit B (181 aa).

[4Fe-4S] cluster is bound by residues Cys-45, Cys-46, Cys-111, and Cys-140.

Belongs to the complex I 20 kDa subunit family. As to quaternary structure, NDH-1 is composed of 14 different subunits. Subunits NuoB, C, D, E, F, and G constitute the peripheral sector of the complex. The cofactor is [4Fe-4S] cluster.

It is found in the cell inner membrane. The enzyme catalyses a quinone + NADH + 5 H(+)(in) = a quinol + NAD(+) + 4 H(+)(out). Functionally, NDH-1 shuttles electrons from NADH, via FMN and iron-sulfur (Fe-S) centers, to quinones in the respiratory chain. The immediate electron acceptor for the enzyme in this species is believed to be a menaquinone. Couples the redox reaction to proton translocation (for every two electrons transferred, four hydrogen ions are translocated across the cytoplasmic membrane), and thus conserves the redox energy in a proton gradient. The sequence is that of NADH-quinone oxidoreductase subunit B from Flavobacterium psychrophilum (strain ATCC 49511 / DSM 21280 / CIP 103535 / JIP02/86).